A 152-amino-acid chain; its full sequence is Small heat shock protein HspA (152 aa).

In terms of domain architecture, sHSP spans 29-139 (TAGEANYPPC…KPRRIPIDNL (111 aa)).

Belongs to the small heat shock protein (HSP20) family.

The sequence is that of Small heat shock protein HspA (hspA) from Bradyrhizobium diazoefficiens (strain JCM 10833 / BCRC 13528 / IAM 13628 / NBRC 14792 / USDA 110).